We begin with the raw amino-acid sequence, 268 residues long: Small ribosomal subunit protein uS10m (268 aa).

Residues 1–64 constitute a mitochondrion transit peptide; sequence MIIRPVVRSL…RITTTTEAPK (64 aa).

The protein belongs to the universal ribosomal protein uS10 family. Component of the mitochondrial small ribosomal subunit (mt-SSU). Mature N.crassa 74S mitochondrial ribosomes consist of a small (37S) and a large (54S) subunit. The 37S small subunit contains a 16S ribosomal RNA (16S mt-rRNA) and 32 different proteins. The 54S large subunit contains a 23S rRNA (23S mt-rRNA) and 42 different proteins.

Its subcellular location is the mitochondrion. Functionally, component of the mitochondrial ribosome (mitoribosome), a dedicated translation machinery responsible for the synthesis of mitochondrial genome-encoded proteins, including at least some of the essential transmembrane subunits of the mitochondrial respiratory chain. The mitoribosomes are attached to the mitochondrial inner membrane and translation products are cotranslationally integrated into the membrane. The chain is Small ribosomal subunit protein uS10m (mrp-10) from Neurospora crassa (strain ATCC 24698 / 74-OR23-1A / CBS 708.71 / DSM 1257 / FGSC 987).